Here is a 327-residue protein sequence, read N- to C-terminus: Fe-S cluster assembly protein DRE2 (327 aa).

The segment covering 1 to 14 (MSPATVTIDTTPDF) has biased composition (polar residues). 2 disordered regions span residues 1–20 (MSPATVTIDTTPDFSNGGAP) and 153–179 (NKGEGGGPVQSPAAATQPTAPAPAAAA). The tract at residues 17–144 (GGAPHSTLLL…EKPAEEVAAV (128 aa)) is N-terminal SAM-like domain. A linker region spans residues 145–214 (PLKFLKKKNK…EDELMTEEDL (70 aa)). Residues 164–179 (PAAATQPTAPAPAAAA) are compositionally biased toward low complexity. The [2Fe-2S] cluster site is built by C224, C235, C238, and C240. The segment at 224–240 (CAPKPGKKRRACKDCTC) is fe-S binding site A. C290, C293, C301, and C304 together coordinate [4Fe-4S] cluster. 2 short sequence motifs (cx2C motif) span residues 290 to 293 (CGSC) and 301 to 304 (CADC). Residues 290–304 (CGSCALGDAFRCADC) are fe-S binding site B.

The protein belongs to the anamorsin family. As to quaternary structure, monomer. Interacts with TAH18. Interacts with MIA40. It depends on [2Fe-2S] cluster as a cofactor. [4Fe-4S] cluster is required as a cofactor.

The protein localises to the cytoplasm. Its subcellular location is the mitochondrion intermembrane space. Component of the cytosolic iron-sulfur (Fe-S) protein assembly (CIA) machinery required for the maturation of extramitochondrial Fe-S proteins. Part of an electron transfer chain functioning in an early step of cytosolic Fe-S biogenesis, facilitating the de novo assembly of a [4Fe-4S] cluster on the scaffold complex CFD1-NBP35. Electrons are transferred to DRE2 from NADPH via the FAD- and FMN-containing protein TAH18. TAH18-DRE2 are also required for the assembly of the diferric tyrosyl radical cofactor of ribonucleotide reductase (RNR), probably by providing electrons for reduction during radical cofactor maturation in the catalytic small subunit RNR2. The chain is Fe-S cluster assembly protein DRE2 from Pyricularia oryzae (strain 70-15 / ATCC MYA-4617 / FGSC 8958) (Rice blast fungus).